The sequence spans 111 residues: Nucleoid-associated protein NMCC_1355 (111 aa).

This sequence belongs to the YbaB/EbfC family. In terms of assembly, homodimer.

The protein resides in the cytoplasm. Its subcellular location is the nucleoid. In terms of biological role, binds to DNA and alters its conformation. May be involved in regulation of gene expression, nucleoid organization and DNA protection. This is Nucleoid-associated protein NMCC_1355 from Neisseria meningitidis serogroup C (strain 053442).